The primary structure comprises 360 residues: Photosystem II protein D1 (360 aa).

Transmembrane regions (helical) follow at residues 29 to 46 (YVGWFGVIMIPTLLTATT), 118 to 133 (HFLLGVFCYLGRQWEL), and 142 to 156 (WICVAYSAPVSAATA). H118 provides a ligand contact to chlorophyll a. Position 126 (Y126) interacts with pheophytin a. [CaMn4O5] cluster contacts are provided by D170 and E189. Residues 197–218 (FHMLGVAGVFGGSLFSAMHGSL) traverse the membrane as a helical segment. H198 serves as a coordination point for chlorophyll a. Residues H215 and 264 to 265 (SF) each bind a quinone. Position 215 (H215) interacts with Fe cation. H272 contacts Fe cation. The helical transmembrane segment at 274–288 (FLGAWPVIGIWFTAM) threads the bilayer. The [CaMn4O5] cluster site is built by H332, E333, D342, and A344. A propeptide spanning residues 345–360 (SGEQAPVALTAPAING) is cleaved from the precursor.

Belongs to the reaction center PufL/M/PsbA/D family. PSII is composed of 1 copy each of membrane proteins PsbA, PsbB, PsbC, PsbD, PsbE, PsbF, PsbH, PsbI, PsbJ, PsbK, PsbL, PsbM, PsbT, PsbX, PsbY, PsbZ, Psb30/Ycf12, peripheral proteins PsbO, CyanoQ (PsbQ), PsbU, PsbV and a large number of cofactors. It forms dimeric complexes. The D1/D2 heterodimer binds P680, chlorophylls that are the primary electron donor of PSII, and subsequent electron acceptors. It shares a non-heme iron and each subunit binds pheophytin, quinone, additional chlorophylls, carotenoids and lipids. D1 provides most of the ligands for the Mn4-Ca-O5 cluster of the oxygen-evolving complex (OEC). There is also a Cl(-1) ion associated with D1 and D2, which is required for oxygen evolution. The PSII complex binds additional chlorophylls, carotenoids and specific lipids. is required as a cofactor. In terms of processing, tyr-161 forms a radical intermediate that is referred to as redox-active TyrZ, YZ or Y-Z. Post-translationally, C-terminally processed by CtpA; processing is essential to allow assembly of the oxygen-evolving complex and thus photosynthetic growth.

The protein resides in the cellular thylakoid membrane. It catalyses the reaction 2 a plastoquinone + 4 hnu + 2 H2O = 2 a plastoquinol + O2. Photosystem II (PSII) is a light-driven water:plastoquinone oxidoreductase that uses light energy to abstract electrons from H(2)O, generating O(2) and a proton gradient subsequently used for ATP formation. It consists of a core antenna complex that captures photons, and an electron transfer chain that converts photonic excitation into a charge separation. The D1/D2 (PsbA/PsbD) reaction center heterodimer binds P680, the primary electron donor of PSII as well as several subsequent electron acceptors. The chain is Photosystem II protein D1 from Microcystis aeruginosa.